Consider the following 474-residue polypeptide: Aspartic-type endopeptidase ctsD (474 aa).

Positions 1–19 are cleaved as a signal peptide; sequence MHLLQCLLSTISLASTVTA. A Peptidase A1 domain is found at 106-413; that stretch reads YFATVRVGSQ…DYDNHRIGFA (308 aa). D124 is a catalytic residue. 4 N-linked (GlcNAc...) asparagine glycosylation sites follow: N189, N197, N275, and N301. Residue D307 is part of the active site. N338, N344, and N414 each carry an N-linked (GlcNAc...) asparagine glycan. S452 carries GPI-anchor amidated serine lipidation. The propeptide at 453–474 is removed in mature form; sequence ASIVSRFVHWPFIFALLCMVLV.

Belongs to the peptidase A1 family.

It is found in the cell membrane. In terms of biological role, secreted aspartic-type endopeptidase which is secreted and contributes to virulence. The sequence is that of Aspartic-type endopeptidase ctsD (ctsD) from Aspergillus fumigatus (strain ATCC MYA-4609 / CBS 101355 / FGSC A1100 / Af293) (Neosartorya fumigata).